The chain runs to 287 residues: Pantothenate synthetase (287 aa).

30–37 (MGNLHSGH) lines the ATP pocket. Histidine 37 serves as the catalytic Proton donor. Glutamine 61 contributes to the (R)-pantoate binding site. Glutamine 61 contacts beta-alanine. 149–152 (GEKD) contributes to the ATP binding site. Glutamine 155 provides a ligand contact to (R)-pantoate. Residues valine 178 and 186-189 (LSSR) contribute to the ATP site.

It belongs to the pantothenate synthetase family. In terms of assembly, homodimer.

It is found in the cytoplasm. The catalysed reaction is (R)-pantoate + beta-alanine + ATP = (R)-pantothenate + AMP + diphosphate + H(+). Its pathway is cofactor biosynthesis; (R)-pantothenate biosynthesis; (R)-pantothenate from (R)-pantoate and beta-alanine: step 1/1. In terms of biological role, catalyzes the condensation of pantoate with beta-alanine in an ATP-dependent reaction via a pantoyl-adenylate intermediate. This chain is Pantothenate synthetase, found in Pseudomonas putida (strain ATCC 47054 / DSM 6125 / CFBP 8728 / NCIMB 11950 / KT2440).